The chain runs to 316 residues: Ribosomal RNA small subunit methyltransferase H (316 aa).

S-adenosyl-L-methionine is bound by residues 35–37 (GGH), Asp55, Phe79, Asp101, and Gln108. The segment at 291–316 (ALKPSDQEVELNPRSRSSVLRVAEKL) is disordered.

Belongs to the methyltransferase superfamily. RsmH family.

It is found in the cytoplasm. The enzyme catalyses cytidine(1402) in 16S rRNA + S-adenosyl-L-methionine = N(4)-methylcytidine(1402) in 16S rRNA + S-adenosyl-L-homocysteine + H(+). Specifically methylates the N4 position of cytidine in position 1402 (C1402) of 16S rRNA. The polypeptide is Ribosomal RNA small subunit methyltransferase H (Vibrio cholerae serotype O1 (strain ATCC 39315 / El Tor Inaba N16961)).